The sequence spans 231 residues: DNA mismatch repair protein MutH (231 aa).

The protein belongs to the MutH family.

The protein localises to the cytoplasm. Sequence-specific endonuclease that cleaves unmethylated GATC sequences. It is involved in DNA mismatch repair. This chain is DNA mismatch repair protein MutH, found in Pectobacterium atrosepticum (strain SCRI 1043 / ATCC BAA-672) (Erwinia carotovora subsp. atroseptica).